A 1273-amino-acid polypeptide reads, in one-letter code: Receptor-type tyrosine-protein phosphatase C (1273 aa).

The N-terminal stretch at 1–23 (MYLWLKLLAFSLALLGPEVFVTG) is a signal peptide. Topologically, residues 24-546 (QGTTDDGLDT…KPQSTSYNSK (523 aa)) are extracellular. The interval 45-192 (LPARTTEFTP…TEIATPQTKP (148 aa)) is disordered. Polar residues-rich tracts occupy residues 50-77 (TEFT…SSTL), 84-111 (QPDS…TLTA), and 141-192 (RNST…QTKP). A glycan (N-linked (GlcNAc...) asparagine) is linked at Asn-62. N-linked (GlcNAc...) asparagine glycosylation is found at Asn-142, Asn-153, Asn-164, Asn-178, Asn-200, Asn-245, Asn-250, Asn-271, Asn-282, Asn-327, Asn-333, Asn-371, Asn-374, Asn-471, and Asn-502. 2 consecutive Fibronectin type-III domains span residues 361–452 (PEML…TKAA) and 453–545 (RPGK…SYNS). A helical membrane pass occupies residues 547 to 567 (ALIIFLVFLIIVTSIALLVVL). The Cytoplasmic segment spans residues 568 to 1273 (YKIYDLRKKR…PMSPALTPSS (706 aa)). Tyrosine-protein phosphatase domains lie at 622 to 881 (FLAE…LVEY) and 913 to 1196 (LEAE…MASI). Phosphotyrosine is present on Tyr-652. Substrate contacts are provided by residues Asp-790, 822-828 (CSAGVGR), and Gln-866. Cys-822 acts as the Phosphocysteine intermediate in catalysis. Ser-944, Ser-963, Ser-966, Ser-970, Ser-973, Ser-974, and Ser-978 each carry phosphoserine. The tract at residues 960–984 (LEMSKESEAESDESSDEDSDSEETS) is disordered. Residues 968–981 (AESDESSDEDSDSE) show a composition bias toward acidic residues. Cys-1137 acts as the Phosphocysteine intermediate in catalysis. 2 positions are modified to phosphoserine: Ser-1209 and Ser-1266. Positions 1219 to 1273 (VDGAKQDANCVQPADPLNKAQEDSKEVGASEPASGSEEPEHSANGPMSPALTPSS) are disordered.

The protein belongs to the protein-tyrosine phosphatase family. Receptor class 1/6 subfamily. Interacts with SKAP1. Interacts with DPP4; the interaction is enhanced in an interleukin-12-dependent manner in activated lymphocytes. Binds GANAB and PRKCSH. Interacts with CD53; this interaction stabilizes PTPRC on the membrane and is required for optimal phosphatase activity. Interacts with CLEC10A. Heavily N- and O-glycosylated. In terms of processing, the cytoplasmic domain contains potential phosphorylation sites. As to expression, isoform 1 and isoform 2 are found in thymocyte and lymph node. Isoform 4 and isoform 3 are found in the lymph nod.

It localises to the cell membrane. The protein resides in the membrane raft. Its subcellular location is the synapse. The catalysed reaction is O-phospho-L-tyrosyl-[protein] + H2O = L-tyrosyl-[protein] + phosphate. Functionally, protein tyrosine-protein phosphatase required for T-cell activation through the antigen receptor. Acts as a positive regulator of T-cell coactivation upon binding to DPP4. The first PTPase domain has enzymatic activity, while the second one seems to affect the substrate specificity of the first one. Upon T-cell activation, recruits and dephosphorylates SKAP1 and FYN. Dephosphorylates LYN, and thereby modulates LYN activity. Interacts with CLEC10A at antigen presenting cell-T cell contact; CLEC10A on immature dendritic cells recognizes Tn antigen-carrying PTPRC/CD45 receptor on effector T cells and modulates T cell activation threshold to limit autoreactivity. This chain is Receptor-type tyrosine-protein phosphatase C (Ptprc), found in Rattus norvegicus (Rat).